A 388-amino-acid polypeptide reads, in one-letter code: MGKKAIQFGGGNIGRGFVAEFLHEAGYEVVFVDVMDKIIDALTSNPSYQVTEVSDEGERTKTITNYSAINSKTHESEVVQEIATADVVTCAVGPNILKFIAPVIAKGIDARTASKPLAVIACENAIGATDTLHGFIKQNTDESRLSTMGERAQFANSAIDRIVPNQPAGEGLNVRIEKFYEWVVEKTPFGSVGHPDIPAIHWVDHLEPYIERKLFTVNTGHATTAYYGYQRGKKMIAEALADPEIRQIVHQVLEETASLIVAKHEISEEEQKEYVNTIISRISNPYLEDNVERVGRAPLRKLSRKERFIGPAAQLAEKGMKYDALLGSVEMALRFQNVPGDEESVELAKILNEMSADDATAKLTGLEKSHPLYQPVQNVVAKVQKGGK.

Alanine 5–glycine 16 provides a ligand contact to NAD(+). Lysine 213 is an active-site residue.

The protein belongs to the mannitol dehydrogenase family. Monomer.

The enzyme catalyses D-mannitol 1-phosphate + NAD(+) = beta-D-fructose 6-phosphate + NADH + H(+). Catalyzes the NAD(H)-dependent interconversion of D-fructose 6-phosphate and D-mannitol 1-phosphate in the mannitol metabolic pathway. The protein is Mannitol-1-phosphate 5-dehydrogenase (mpdA) of Aspergillus clavatus (strain ATCC 1007 / CBS 513.65 / DSM 816 / NCTC 3887 / NRRL 1 / QM 1276 / 107).